The following is a 4743-amino-acid chain: Apolipoprotein B-100 (4743 aa).

The N-terminal stretch at 1–27 is a signal peptide; the sequence is MGPQRPALRAPLLLLFLLLFLDTSVWA. The segment at 29–113 is heparin-binding; it reads DATRFKHLRK…KNSEEFASAM (85 aa). Positions 33–660 constitute a Vitellogenin domain; the sequence is FKHLRKYVYS…PSSYLPKESM (628 aa). The cysteines at positions 65 and 84 are disulfide-linked. Asn-172 carries an N-linked (GlcNAc...) asparagine glycan. 4 cysteine pairs are disulfide-bonded: Cys-173–Cys-199, Cys-232–Cys-248, Cys-372–Cys-377, and Cys-466–Cys-501. The segment at 219–293 is heparin-binding; it reads VRPLSTLISS…RFFRGGINQV (75 aa). Residues 890-947 form a heparin-binding region; it reads NTNFFHESGLEARVALKAGQLKVIIPSPKRPVKLFSGSNTLHLVSTTKTEVIPPLIEN. Cys-954 and Cys-964 form a disulfide bridge. Residues Asn-971, Asn-1336, Asn-1345, and Asn-1491 are each glycosylated (N-linked (GlcNAc...) asparagine). Position 1973 is an N6-acetyllysine (Lys-1973). Ser-2006 is subject to Phosphoserine. Residues 2010–2145 are heparin-binding; it reads NDAFDEPREF…EKLSQLETYA (136 aa). N-linked (GlcNAc...) asparagine glycosylation is found at Asn-2094, Asn-2522, Asn-2662, Asn-2741, Asn-2791, Asn-2897, Asn-2944, and Asn-3063. The segment at 3123 to 3198 is heparin-binding; the sequence is FLKTTKQSFD…KIKFDKYKTE (76 aa). Positions 3136-3146 are basic (possible receptor binding region); the sequence is KAQYKKNRDKH. Residues Asn-3186, Asn-3299, and Asn-3321 are each glycosylated (N-linked (GlcNAc...) asparagine). The tract at residues 3336-3356 is LDL receptor binding; sequence VTDALQYKLEGTSRLMRKKVL. The heparin-binding stretch occupies residues 3346–3479; the sequence is GTSRLMRKKV…QEYSGSVANE (134 aa). Residues 3349–3357 form a basic (possible receptor binding region) region; it reads RLMRKKVLK. N-linked (GlcNAc...) asparagine glycans are attached at residues Asn-3428, Asn-3715, and Asn-3828. A Phosphoserine modification is found at Ser-3981. A Phosphothreonine modification is found at Thr-3985. Asn-4203 and Asn-4232 each carry an N-linked (GlcNAc...) asparagine glycan.

Interacts with PCSK9. Interacts with MTTP. Interacts with AUP1. Interacts with CIDEB. Post-translationally, palmitoylated; structural requirement for proper assembly of the hydrophobic core of the lipoprotein particle. Detected in intestine and liver (at protein level).

It localises to the cytoplasm. The protein resides in the secreted. Its subcellular location is the lipid droplet. Its function is as follows. Apolipoprotein B is a major protein constituent of chylomicrons (apo B-48), LDL (apo B-100) and VLDL (apo B-100). Apo B-100 functions as a recognition signal for the cellular binding and internalization of LDL particles by the apoB/E receptor. This is Apolipoprotein B-100 (Apob) from Rattus norvegicus (Rat).